Here is a 436-residue protein sequence, read N- to C-terminus: MNYLSPAKIDSLFSAQKAYFATRATADVGFRKQSLERLKEAVINNKEALYSALAEDLGKPKDVVDLAEIGAVLHEIDFALAHLDEWVAPVSVPSPDIIAPSECYVVQEPYGVTYIIGPFNYPVNLTLTPLIGAIIGGNTCIIKPSETTPETSAVIEKIIAEAFAPEYVAVIQGGRDENSHLLSLPFDFIFFTGSPNVGKVVMQAAAKHLTPVVLELGGKCPLIVLPDADLDQTVNQLMFGKFINSGQTCIAPDYLYVHYSVKDALLERLVERVKTELPEINSTGKLVTERQVQRLVSLLEATQGQVLVGSQADVSKRALSATVVDGVEWNDPLMSEELFGPILPVLEFDSVRTAIDQVNKHHPKPLAVYVFGKDMDVAKGIINQIQSGDAQVNGVMLHAFSPYLPFGGIGASGMGEYHGHFSYLTFTHKKSVRIVP.

NADP(+)-binding positions include 117 to 119 (GPF), 143 to 147 (KPSET), 175 to 178 (RDEN), 193 to 194 (GS), 215 to 216 (EL), cysteine 249, and 337 to 339 (ELF). Catalysis depends on residues glutamate 215 and cysteine 249.

It belongs to the aldehyde dehydrogenase family.

The catalysed reaction is benzaldehyde + NAD(+) + H2O = benzoate + NADH + 2 H(+). It catalyses the reaction benzaldehyde + NADP(+) + H2O = benzoate + NADPH + 2 H(+). The protein operates within aromatic compound metabolism; (R)-mandelate degradation; benzoate from (R)-mandelate: step 4/4. In terms of biological role, NAD or NADP-dependent benzaldehyde dehydrogenase that catalyzes the conversion of benzaldehyde into benzoate in the (R)-mandelate degradation pathway. The polypeptide is NAD(P)-dependent benzaldehyde dehydrogenase (mdlD) (Pseudomonas putida (Arthrobacter siderocapsulatus)).